Consider the following 464-residue polypeptide: CD-NTase-associated protein 4 (464 aa).

The tract at residues 1–228 (MSASLLEKQS…FENFICHALE (228 aa)) is N-terminal endonuclease domain. The C-terminal SAVED domain stretch occupies residues 229–464 (EDRTQWLSDP…EYMPTAELNI (236 aa)).

It belongs to the Cap4 nuclease family. A monomer in the absence of cAAA, in its presence it forms oligomers.

With respect to regulation, DNase activity is activated upon ligand binding. In terms of biological role, effector DNase of a CBASS antivirus system. CBASS (cyclic oligonucleotide-based antiphage signaling system) provides immunity against bacteriophage. The CD-NTase protein synthesizes cyclic nucleotides in response to infection; these serve as specific second messenger signals. The signals activate a diverse range of effectors, leading to bacterial cell death and thus abortive phage infection. A type II-C CBASS system. Its function is as follows. Probably in the presence of its endogenous cyclic nucleotide (synthesized by the cognate CD-NTase protein in the CBASS operon), or of 2',3',3'-cyclic AMP-AMP-AMP (cAAA) synthesized by Acinetobacter sp. ATCC 27244, endonucleolytically degrades dsDNA in a non-sequence specific manner. It is not activated by other cyclic nucleotides. The sequence is that of CD-NTase-associated protein 4 from Moraxella osloensis.